A 497-amino-acid chain; its full sequence is Guanosine-5'-triphosphate,3'-diphosphate pyrophosphatase (497 aa).

Belongs to the GppA/Ppx family. GppA subfamily.

It carries out the reaction guanosine 3'-diphosphate 5'-triphosphate + H2O = guanosine 3',5'-bis(diphosphate) + phosphate + H(+). The protein operates within purine metabolism; ppGpp biosynthesis; ppGpp from GTP: step 2/2. Catalyzes the conversion of pppGpp to ppGpp. Guanosine pentaphosphate (pppGpp) is a cytoplasmic signaling molecule which together with ppGpp controls the 'stringent response', an adaptive process that allows bacteria to respond to amino acid starvation, resulting in the coordinated regulation of numerous cellular activities. This is Guanosine-5'-triphosphate,3'-diphosphate pyrophosphatase from Vibrio cholerae serotype O1 (strain ATCC 39541 / Classical Ogawa 395 / O395).